The sequence spans 114 residues: Iron-sulfur cluster insertion protein ErpA (114 aa).

Positions 42, 106, and 108 each coordinate iron-sulfur cluster.

The protein belongs to the HesB/IscA family. Homodimer. It depends on iron-sulfur cluster as a cofactor.

In terms of biological role, required for insertion of 4Fe-4S clusters for at least IspG. This is Iron-sulfur cluster insertion protein ErpA from Yersinia pseudotuberculosis serotype O:1b (strain IP 31758).